We begin with the raw amino-acid sequence, 215 residues long: Deoxyribose-phosphate aldolase (215 aa).

Catalysis depends on D89, which acts as the Proton donor/acceptor. The active-site Schiff-base intermediate with acetaldehyde is K150. Catalysis depends on K174, which acts as the Proton donor/acceptor.

The protein belongs to the DeoC/FbaB aldolase family. DeoC type 1 subfamily.

It is found in the cytoplasm. It carries out the reaction 2-deoxy-D-ribose 5-phosphate = D-glyceraldehyde 3-phosphate + acetaldehyde. Its pathway is carbohydrate degradation; 2-deoxy-D-ribose 1-phosphate degradation; D-glyceraldehyde 3-phosphate and acetaldehyde from 2-deoxy-alpha-D-ribose 1-phosphate: step 2/2. Its function is as follows. Catalyzes a reversible aldol reaction between acetaldehyde and D-glyceraldehyde 3-phosphate to generate 2-deoxy-D-ribose 5-phosphate. The protein is Deoxyribose-phosphate aldolase of Natronomonas pharaonis (strain ATCC 35678 / DSM 2160 / CIP 103997 / JCM 8858 / NBRC 14720 / NCIMB 2260 / Gabara) (Halobacterium pharaonis).